The following is a 283-amino-acid chain: Pyridoxine/pyridoxal/pyridoxamine kinase (283 aa).

Ser-23 and His-59 together coordinate substrate. Residue Asp-125 coordinates ATP. Residue Tyr-136 participates in Mg(2+) binding. ATP contacts are provided by residues Thr-157, Glu-162, Thr-195, 222–225 (HAHV), and Thr-232. Glu-162 contacts Mg(2+). Substrate is bound at residue Asp-234.

The protein belongs to the pyridoxine kinase family. PdxK subfamily. In terms of assembly, homodimer. The cofactor is Mg(2+).

The catalysed reaction is pyridoxal + ATP = pyridoxal 5'-phosphate + ADP + H(+). It catalyses the reaction pyridoxine + ATP = pyridoxine 5'-phosphate + ADP + H(+). It carries out the reaction pyridoxamine + ATP = pyridoxamine 5'-phosphate + ADP + H(+). It participates in cofactor metabolism; pyridoxal 5'-phosphate salvage; pyridoxal 5'-phosphate from pyridoxal: step 1/1. The protein operates within cofactor metabolism; pyridoxal 5'-phosphate salvage; pyridoxine 5'-phosphate from pyridoxine: step 1/1. It functions in the pathway cofactor metabolism; pyridoxal 5'-phosphate salvage; pyridoxamine 5'-phosphate from pyridoxamine: step 1/1. Its function is as follows. B6-vitamer kinase involved in the salvage pathway of pyridoxal 5'-phosphate (PLP). Catalyzes the phosphorylation of pyridoxine (PN), pyridoxal (PL), and pyridoxamine (PM), forming their respective 5'-phosphorylated esters, i.e. PNP, PLP and PMP. In Bordetella pertussis (strain Tohama I / ATCC BAA-589 / NCTC 13251), this protein is Pyridoxine/pyridoxal/pyridoxamine kinase.